Consider the following 185-residue polypeptide: Tumor necrosis factor receptor superfamily member 17 (185 aa).

Topologically, residues 1-49 are extracellular; that stretch reads MAQQCFHSEYFDSLLHACKPCHLRCSNPPATCQPYCDPSVTSSVKGTYT. One copy of the TNFR-Cys repeat lies at 4-36; it reads QCFHSEYFDSLLHACKPCHLRCSNPPATCQPYC. Disulfide bonds link Cys-5-Cys-18, Cys-21-Cys-32, and Cys-25-Cys-36. The helical; Signal-anchor for type III membrane protein transmembrane segment at 50–70 threads the bilayer; the sequence is VLWIFLGLTLVLSLALFTISF. Residues 71–185 lie on the Cytoplasmic side of the membrane; the sequence is LLRKMNPEAL…MGMEKPTHTR (115 aa).

As to quaternary structure, associates with TRAF1, TRAF2, TRAF3, TRAF5 and TRAF6. Detected in spleen, thymus, bone marrow and heart, and at lower levels in kidney and lung.

The protein resides in the membrane. Functionally, receptor for TNFSF13B/BLyS/BAFF and TNFSF13/APRIL. Promotes B-cell survival and plays a role in the regulation of humoral immunity. Activates NF-kappa-B and JNK. The protein is Tumor necrosis factor receptor superfamily member 17 (Tnfrsf17) of Mus musculus (Mouse).